A 423-amino-acid polypeptide reads, in one-letter code: Tegument protein UL43 (423 aa).

The segment covering 1-12 (MEKTPAETTAVS) has biased composition (polar residues). The interval 1-46 (MEKTPAETTAVSAGNVPRDSIPCITNVSADTRGRTRPSRPATVPQR) is disordered.

This sequence belongs to the herpesviridae US22 family.

It localises to the virion tegument. The polypeptide is Tegument protein UL43 (UL43) (Homo sapiens (Human)).